The sequence spans 365 residues: Aminomethyltransferase (365 aa).

Belongs to the GcvT family. In terms of assembly, the glycine cleavage system is composed of four proteins: P, T, L and H.

It carries out the reaction N(6)-[(R)-S(8)-aminomethyldihydrolipoyl]-L-lysyl-[protein] + (6S)-5,6,7,8-tetrahydrofolate = N(6)-[(R)-dihydrolipoyl]-L-lysyl-[protein] + (6R)-5,10-methylene-5,6,7,8-tetrahydrofolate + NH4(+). Its function is as follows. The glycine cleavage system catalyzes the degradation of glycine. This Chlorobium phaeovibrioides (strain DSM 265 / 1930) (Prosthecochloris vibrioformis (strain DSM 265)) protein is Aminomethyltransferase.